The primary structure comprises 179 residues: MLKIWSMKEKQAAEGGSAKKKVTAAQLRVQKDLSELSLPSTMKTHFPSAEDIMNFELTVRPDEGFYQGGEFRFSFYVNPNFPHEPPKVKCLQKVYHPNIDLEGNVCLNILREDWKPVLSLNAVMIGLQYLFLEPNASDPLNKDAAHQMTANREEFKRNVKHSMAGGSVAGERFDCVLIK.

The 145-residue stretch at 24 to 168 (AAQLRVQKDL…VKHSMAGGSV (145 aa)) folds into the UBC core domain. The active-site Glycyl thioester intermediate is cysteine 106.

The protein belongs to the ubiquitin-conjugating enzyme family. UBC12 subfamily.

The catalysed reaction is [E1 NEDD8-activating enzyme]-S-[NEDD8 protein]-yl-L-cysteine + [E2 NEDD8-conjugating enzyme]-L-cysteine = [E1 NEDD8-activating enzyme]-L-cysteine + [E2 NEDD8-conjugating enzyme]-S-[NEDD8-protein]-yl-L-cysteine.. It participates in protein modification; protein neddylation. Functionally, accepts the ubiquitin-like protein NEDD8/RUB1 from the UBA3-ULA1 E1 complex and catalyzes its covalent attachment to other proteins. The sequence is that of NEDD8-conjugating enzyme UBC12 (UBC12) from Yarrowia lipolytica (strain CLIB 122 / E 150) (Yeast).